The chain runs to 383 residues: Delta(12)-fatty-acid desaturase (383 aa).

Residues 1–24 are disordered; that stretch reads MGAGGRMPVPTSSKKSETDTTKRV. The span at 14-24 shows a compositional bias: basic and acidic residues; the sequence is KKSETDTTKRV. A helical transmembrane segment spans residues 56 to 76; it reads LISDIIIASCFYYVATNYFSL. The Histidine box-1 signature appears at 105 to 109; the sequence is HECGH. The chain crosses the membrane as a helical span at residues 117 to 137; sequence WLDDTVGLIFHSFLLVPYFSW. A Histidine box-2 motif is present at residues 141–145; the sequence is HRRHH. 3 consecutive transmembrane segments (helical) span residues 179 to 199, 225 to 245, and 252 to 272; these read IMML…FNVS, IYLS…YAAA, and ICLY…ITYL. Positions 315–319 match the Histidine box-3 motif; that stretch reads HVAHH.

The protein belongs to the fatty acid desaturase type 1 family. Homo- and heterodimer. Interacts with FAD3 but not with FAD6. FAD2-FAD3 heterodimers can form a metabolic channel in which 18:1-PC is converted to 18:3-PC without releasing a free 18:2-PC intermediate. As to expression, expressed in shoots and roots. Expressed in leaves, stems, flowers and siliques.

Its subcellular location is the endoplasmic reticulum membrane. The protein localises to the microsome membrane. The enzyme catalyses (9Z)-octadecenoyl-CoA + 2 Fe(II)-[cytochrome b5] + O2 + 2 H(+) = (9Z,12Z)-octadecadienoyl-CoA + 2 Fe(III)-[cytochrome b5] + 2 H2O. It carries out the reaction (9Z)-hexadecenoyl-CoA + 2 Fe(II)-[cytochrome b5] + O2 + 2 H(+) = (9Z,12Z)-hexadecadienoyl-CoA + 2 Fe(III)-[cytochrome b5] + 2 H2O. The catalysed reaction is a (9Z)-octadecenoyl-containing glycerolipid + 2 Fe(II)-[cytochrome b5] + O2 + 2 H(+) = a (9Z,12Z)-octadecadienoyl-containing glycerolipid + 2 Fe(III)-[cytochrome b5] + 2 H2O. It catalyses the reaction (9Z)-octadecenoyl-CoA + AH2 + O2 = (9Z,12Z)-octadecadienoyl-CoA + A + 2 H2O. The enzyme catalyses (9Z)-hexadecenoyl-CoA + AH2 + O2 = (9Z,12Z)-hexadecadienoyl-CoA + A + 2 H2O. It carries out the reaction (9Z)-tetradecenoyl-CoA + 2 Fe(II)-[cytochrome b5] + O2 + 2 H(+) = (9Z,12Z)-tetradecadienoyl-CoA + 2 Fe(III)-[cytochrome b5] + 2 H2O. The catalysed reaction is (9Z)-pentadecenoyl-CoA + 2 Fe(II)-[cytochrome b5] + O2 + 2 H(+) = (9Z,12Z)-pentadecadienoyl-CoA + 2 Fe(III)-[cytochrome b5] + 2 H2O. It catalyses the reaction (9Z)-heptadecenoyl-CoA + 2 Fe(II)-[cytochrome b5] + O2 + 2 H(+) = (9Z,12Z)-heptadecadienoyl-CoA + 2 Fe(III)-[cytochrome b5] + 2 H2O. The protein operates within lipid metabolism; polyunsaturated fatty acid biosynthesis. ER (microsomal) omega-6 fatty acid desaturase introduces the second double bond in the biosynthesis of 18:3 fatty acids, important constituents of plant membranes. Delta(12)-desaturase with regioselectivity determined by the double bond (delta(9) position) and carboxyl group of the substrate. Can use both 16:1 and 18:1 fatty acids as substrates. It is thought to use cytochrome b5 as an electron donor and to act on fatty acids esterified to phosphatidylcholine (PC) and, possibly, other phospholipids. Very low constitutive hydroxylation activity. Required for desaturation of fatty acids present in extraplastidial membranes, including mitochondria. Required for salt tolerance during seed germination and early seedling growth. In Arabidopsis thaliana (Mouse-ear cress), this protein is Delta(12)-fatty-acid desaturase.